The following is a 320-amino-acid chain: MAQVLRGTVTDFPGFDERADAETLRKAMKGLGTDEESILTLLTSRSNAQRQEISAAFKTLFGRDLLDDLKSELTGKFEKLIVALMKPSRLYDAYELKHALKGAGTDEKVLTEIIASRTPEELRAIKEVYEEEYGSSLEDDVVGDTSGYYQRMLVVLLQANRDPDAGIDEAQVEQDAQALFQAGELKWGTDEEKFITIFGTRSVSHLRKVFDKYMTISGFQIEETIDRETSGNLEQLLLAVVKSIRSIPAYLAETLYYAMKGAGTDDHTLIRVMVSRSEIDLLNIRKEFRKNFATSLYSMIKGDTSGDYKKALLLLCGGED.

Ala-2 bears the N-acetylalanine mark. 4 Annexin repeats span residues 15-86, 87-158, 170-242, and 246-317; these read FDER…ALMK, PSRL…VLLQ, AQVE…AVVK, and SIPA…LLCG. Lys-29 participates in a covalent cross-link: Glycyl lysine isopeptide (Lys-Gly) (interchain with G-Cter in SUMO1); alternate. A Glycyl lysine isopeptide (Lys-Gly) (interchain with G-Cter in SUMO2); alternate cross-link involves residue Lys-29. Ser-37 carries the post-translational modification Phosphoserine. Residues Lys-70, Lys-76, Lys-79, Lys-97, and Lys-101 each carry the N6-acetyllysine modification. The residue at position 290 (Lys-290) is an N6-succinyllysine. The [IL]-x-C-x-x-[DE] motif signature appears at 314–320; that stretch reads LLCGGED.

The protein belongs to the annexin family. As to quaternary structure, monomer. Binds ATRX and EIF5B. In terms of processing, S-nitrosylation is induced by interferon-gamma and oxidatively-modified low-densitity lipoprotein (LDL(ox)) possibly implicating the iNOS-S100A8/9 transnitrosylase complex.

This protein is an anticoagulant protein that acts as an indirect inhibitor of the thromboplastin-specific complex, which is involved in the blood coagulation cascade. This is Annexin A5 (ANXA5) from Macaca fascicularis (Crab-eating macaque).